A 354-amino-acid chain; its full sequence is CX3C chemokine receptor 1 (354 aa).

Residues methionine 1 to threonine 32 are Extracellular-facing. Residues isoleucine 33–serine 60 form a helical membrane-spanning segment. The Cytoplasmic portion of the chain corresponds to arginine 61–tyrosine 70. Residues leucine 71 to tyrosine 91 form a helical membrane-spanning segment. The Extracellular portion of the chain corresponds to leucine 92 to lysine 104. Cysteine 103 and cysteine 176 are disulfide-bonded. The helical transmembrane segment at leucine 105–isoleucine 126 threads the bilayer. The Cytoplasmic portion of the chain corresponds to aspartate 127 to threonine 143. A helical membrane pass occupies residues valine 144–phenylalanine 168. The Extracellular portion of the chain corresponds to threonine 169–valine 196. Residues asparagine 197 to isoleucine 216 traverse the membrane as a helical segment. The Cytoplasmic portion of the chain corresponds to glutamine 217–arginine 232. Residues leucine 233–leucine 257 form a helical membrane-spanning segment. The Extracellular segment spans residues lysine 258–leucine 274. The helical transmembrane segment at alanine 275–glycine 298 threads the bilayer. Topologically, residues glutamate 299 to leucine 354 are cytoplasmic. Threonine 345 is subject to Phosphothreonine.

Belongs to the G-protein coupled receptor 1 family. In terms of assembly, found in a ternary complex with CX3CL1 and ITGAV:ITGB3 or ITGA4:ITGB1. This protein is not N-glycosylated which is unusual for G-protein-coupled receptors. In terms of tissue distribution, specifically expressed in subsets of leukocytes: expressed in monocytes, subsets of T-cells and natural killer (NK) cells in the circulation, dendritic cells, as well as in microglia in the central nervous system (CNS). Expression level subdivides blood monocytes into two major functional subsets; CD14(+)CD16(-)-CX3CR1(low) inflammatory monocytes and CD14(low)CD16(+)CX3CR1(high) homeostatic monocytes. Expressed in myeloid-derived mucosal dendritic cells, which populate the entire lamina propria of the small intestine.

The protein resides in the cell membrane. Functionally, receptor for the C-X3-C chemokine fractalkine (CX3CL1) present on many early leukocyte cells; CX3CR1-CX3CL1 signaling exerts distinct functions in different tissue compartments, such as immune response, inflammation, cell adhesion and chemotaxis. CX3CR1-CX3CL1 signaling mediates cell migratory functions. Responsible for the recruitment of natural killer (NK) cells to inflamed tissues. Acts as a regulator of inflammation process leading to atherogenesis by mediating macrophage and monocyte recruitment to inflamed atherosclerotic plaques, promoting cell survival. Involved in airway inflammation by promoting interleukin 2-producing T helper (Th2) cell survival in inflamed lung. Involved in the migration of circulating monocytes to non-inflamed tissues, where they differentiate into macrophages and dendritic cells. Acts as a negative regulator of angiogenesis, probably by promoting macrophage chemotaxis. Plays a key role in brain microglia by regulating inflammatory response in the central nervous system (CNS) and regulating synapse maturation. Required to restrain the microglial inflammatory response in the CNS and the resulting parenchymal damage in response to pathological stimuli. Involved in brain development by participating in synaptic pruning, a natural process during which brain microglia eliminates extra synapses during postnatal development. Synaptic pruning by microglia is required to promote the maturation of circuit connectivity during brain development. Acts as an important regulator of the gut microbiota by controlling immunity to intestinal bacteria and fungi. Expressed in lamina propria dendritic cells in the small intestine, which form transepithelial dendrites capable of taking up bacteria in order to provide defense against pathogenic bacteria. Required to initiate innate and adaptive immune responses against dissemination of commensal fungi (mycobiota) component of the gut: expressed in mononuclear phagocytes (MNPs) and acts by promoting induction of antifungal IgG antibodies response to confer protection against disseminated C.albicans or C.auris infection. Also acts as a receptor for C-C motif chemokine CCL26, inducing cell chemotaxis. The chain is CX3C chemokine receptor 1 from Mus musculus (Mouse).